The chain runs to 123 residues: Transmembrane protein 049L (123 aa).

The next 2 helical transmembrane spans lie at 67–87 (VFGA…LWLV) and 104–121 (LSLQ…GVYN).

Its subcellular location is the membrane. The chain is Transmembrane protein 049L from Acheta domesticus (House cricket).